Reading from the N-terminus, the 499-residue chain is MDALYKSTVAKFNEVTQLDCSTESFSIALSAIAGILLLLLLFRSKRHSSLKLPPGKLGIPFIGESFIFLRALRSNSLEQFFDERVKKFGLVFKTSLIGHPTVVLCGPAGNRLILSNEEKLVQMSWPAQFMKLMGENSVATRRGEDHIVMRSALAGFFGPGALQSYIGKMNTEIQSHINEKWKGKDEVNVLPLVRELVFNISAILFFNIYDKQEQDRLHKLLETILVGSFALPIDLPGFGFHRALQGRAKLNKIMLSLIKKRKEDLQSGSATATQDLLSVLLTFRDDKGTPLTNDEILDNFSSLLHASYDTTTSPMALIFKLLSSNPECYQKVVQEQLEILSNKEEGEEITWKDLKAMKYTWQVAQETLRMFPPVFGTFRKAITDIQYDGYTIPKGWKLLWTTYSTHPKDLYFNEPEKFMPSRFDQEGKHVAPYTFLPFGGGQRSCVGWEFSKMEILLFVHHFVKTFSSYTPVDPDEKISGDPLPPLPSKGFSIKLFPRP.

Residues 22-42 traverse the membrane as a helical; Signal-anchor segment; that stretch reads TESFSIALSAIAGILLLLLLF. A heme-binding site is contributed by Cys-445.

The protein belongs to the cytochrome P450 family. Heme serves as cofactor.

It is found in the membrane. The catalysed reaction is taxa-4(5),11(12)-diene + reduced [NADPH--hemoprotein reductase] + O2 = taxa-4(20),11-dien-5alpha-ol + oxidized [NADPH--hemoprotein reductase] + H2O + H(+). Its pathway is alkaloid biosynthesis; taxol biosynthesis; taxa-4(20),11-dien-5alpha-ol from geranylgeranyl diphosphate: step 2/2. In terms of biological role, catalyzes the first oxygenation step of taxol biosynthesis. Can use both taxa-4(5),11(12)-diene and taxa-4(20),11(12)-diene as substrate. This is Taxadiene 5-alpha hydroxylase from Taxus cuspidata (Japanese yew).